The chain runs to 763 residues: Putative alpha-1,3-mannosyltransferase MNN15 (763 aa).

Residues methionine 1–lysine 7 are Cytoplasmic-facing. The chain crosses the membrane as a helical span at residues isoleucine 8 to valine 28. Topologically, residues aspartate 29 to isoleucine 763 are lumenal. 3 N-linked (GlcNAc...) asparagine glycosylation sites follow: asparagine 71, asparagine 157, and asparagine 169. The tract at residues leucine 617–proline 659 is disordered. Basic and acidic residues predominate over residues lysine 649 to proline 659.

The protein belongs to the MNN1/MNT family.

The protein resides in the golgi apparatus membrane. Its pathway is protein modification; protein glycosylation. In terms of biological role, responsible for addition of the terminal mannose residues to the outer chain of core N-linked polysaccharides and to O-linked mannotriose. Implicated in late Golgi modifications. The sequence is that of Putative alpha-1,3-mannosyltransferase MNN15 (MNN15) from Candida albicans (strain SC5314 / ATCC MYA-2876) (Yeast).